The primary structure comprises 255 residues: Thiazole synthase (255 aa).

Lys-96 serves as the catalytic Schiff-base intermediate with DXP. 1-deoxy-D-xylulose 5-phosphate is bound by residues Gly-157, 183-184 (AG), and 205-206 (NT).

The protein belongs to the ThiG family. As to quaternary structure, homotetramer. Forms heterodimers with either ThiH or ThiS.

The protein resides in the cytoplasm. The enzyme catalyses [ThiS sulfur-carrier protein]-C-terminal-Gly-aminoethanethioate + 2-iminoacetate + 1-deoxy-D-xylulose 5-phosphate = [ThiS sulfur-carrier protein]-C-terminal Gly-Gly + 2-[(2R,5Z)-2-carboxy-4-methylthiazol-5(2H)-ylidene]ethyl phosphate + 2 H2O + H(+). It functions in the pathway cofactor biosynthesis; thiamine diphosphate biosynthesis. In terms of biological role, catalyzes the rearrangement of 1-deoxy-D-xylulose 5-phosphate (DXP) to produce the thiazole phosphate moiety of thiamine. Sulfur is provided by the thiocarboxylate moiety of the carrier protein ThiS. In vitro, sulfur can be provided by H(2)S. This chain is Thiazole synthase, found in Staphylococcus saprophyticus subsp. saprophyticus (strain ATCC 15305 / DSM 20229 / NCIMB 8711 / NCTC 7292 / S-41).